Consider the following 732-residue polypeptide: Adducin-related protein 1 (732 aa).

Disordered regions lie at residues 1–22 (MIGR…DPEY) and 684–732 (TRFS…KKDK). Positions 685–705 (RFSSTQGTSEGNTTSRSCTTA) are enriched in polar residues. Positions 716 to 732 (KKKKKKGFLSFMRKKDK) are enriched in basic residues.

Belongs to the aldolase class II family. Adducin subfamily.

It is found in the cytoplasm. The protein resides in the cytoskeleton. Its subcellular location is the cell membrane. Its function is as follows. Membrane-cytoskeleton-associated protein that promotes the assembly of the spectrin-actin network. Plays a role in time-dependent memmory loss and the retention of conditioned behavior over time. The chain is Adducin-related protein 1 from Caenorhabditis elegans.